Reading from the N-terminus, the 614-residue chain is Subtilin transport ATP-binding protein SpaT (614 aa).

The next 5 membrane-spanning stretches (helical) occupy residues 34–54 (FLKL…SLYI), 69–89 (VSIV…SELI), 147–167 (IIQA…SIAF), 175–195 (VSLL…KIGQ), and 267–287 (IAVQ…AFAG). Residues 34–320 (FLKLIRFSII…IMTSIYSIYN (287 aa)) enclose the ABC transmembrane type-1 domain. The ABC transporter domain maps to 353 to 593 (VVFQNVSFIY…CPLYKKMDES (241 aa)). Residue 387–394 (GPNGSGKK) coordinates ATP.

Belongs to the ABC transporter superfamily.

The protein localises to the cell membrane. Probably implicated in the export process of the lantibiotic subtilin. The polypeptide is Subtilin transport ATP-binding protein SpaT (spaT) (Bacillus subtilis).